A 147-amino-acid polypeptide reads, in one-letter code: Hemoglobin subunit epsilon-2 (147 aa).

The Globin domain maps to 3–147 (HFTTEENVAV…VANALTHKYH (145 aa)). Residues Y64 and H93 each contribute to the heme b site.

This sequence belongs to the globin family. In terms of tissue distribution, red blood cells.

Hemoglobin epsilon chain is a beta-type chain found in early embryos. This is Hemoglobin subunit epsilon-2 (HBE2) from Bos taurus (Bovine).